The following is a 206-amino-acid chain: MGYIVALTGGIGSGKSTVANAFADLGINVIDADIIARQVVEPGAPALHAIADHFGENMIAADGTLQRRALRERIFANPEEKNWLNDLLHPLIQQETQHQIQQATSPYVLWVVPLLVENSLYKKANRVLVVDVSPETQLKRTMQRDDVTREHVEQILAAQATREARLAVADDVIDNNGAPDAIASDVARLHAHYLQLASQFVSQEKP.

Residues 4–200 enclose the DPCK domain; sequence IVALTGGIGS…AHYLQLASQF (197 aa). 12–17 lines the ATP pocket; the sequence is GSGKST.

This sequence belongs to the CoaE family.

Its subcellular location is the cytoplasm. It catalyses the reaction 3'-dephospho-CoA + ATP = ADP + CoA + H(+). Its pathway is cofactor biosynthesis; coenzyme A biosynthesis; CoA from (R)-pantothenate: step 5/5. Functionally, catalyzes the phosphorylation of the 3'-hydroxyl group of dephosphocoenzyme A to form coenzyme A. In Shigella flexneri, this protein is Dephospho-CoA kinase.